A 490-amino-acid polypeptide reads, in one-letter code: ATP synthase subunit beta, chloroplastic (490 aa).

An ATP-binding site is contributed by 170-177 (GGAGVGKT).

It belongs to the ATPase alpha/beta chains family. As to quaternary structure, F-type ATPases have 2 components, CF(1) - the catalytic core - and CF(0) - the membrane proton channel. CF(1) has five subunits: alpha(3), beta(3), gamma(1), delta(1), epsilon(1). CF(0) has four main subunits: a(1), b(1), b'(1) and c(9-12).

Its subcellular location is the plastid. The protein resides in the chloroplast thylakoid membrane. It catalyses the reaction ATP + H2O + 4 H(+)(in) = ADP + phosphate + 5 H(+)(out). Its function is as follows. Produces ATP from ADP in the presence of a proton gradient across the membrane. The catalytic sites are hosted primarily by the beta subunits. The sequence is that of ATP synthase subunit beta, chloroplastic from Ipomoea wrightii (Wright's morning glory).